The primary structure comprises 249 residues: Derlin-2.1 (249 aa).

Residues 1 to 21 lie on the Cytoplasmic side of the membrane; it reads MAQAVEEWYRQMPIITRSYLT. A helical membrane pass occupies residues 22–42; it reads AAVVTTVGCTLEIISPYHLYL. Topologically, residues 43-96 are lumenal; the sequence is NPKLVVQHYEIWRLVTNFLYFRKMDLDFLFHMFFLARYCKLLEENSFRGRTADF. The helical transmembrane segment at 97–117 threads the bilayer; that stretch reads FYMLLFGATVLTSIVLIGGMI. Residues 118–122 lie on the Cytoplasmic side of the membrane; sequence PYISE. Residues 123-143 form a helical membrane-spanning segment; sequence TFARILFLSNSLTFMMVYVWS. The Lumenal segment spans residues 144 to 152; sequence KHNPFIHMS. Residues 153–173 traverse the membrane as a helical segment; that stretch reads FLGLFTFTAAYLPWVLLGFSI. At 174–249 the chain is on the cytoplasmic side; it reads LVGSSTWVDL…GAMGLDPQAQ (76 aa).

Belongs to the derlin family. In terms of tissue distribution, expressed in roots, stalks, leaves, embryo and endosperm.

Its subcellular location is the endoplasmic reticulum membrane. Its function is as follows. May be involved in the degradation process of specific misfolded endoplasmic reticulum (ER) luminal proteins. The sequence is that of Derlin-2.1 (DER2.1) from Zea mays (Maize).